A 142-amino-acid polypeptide reads, in one-letter code: Hemoglobin subunit alpha (142 aa).

The Globin domain maps to 2–142 (VLSAADKGHV…VSTVLTSKYR (141 aa)). S4 carries the phosphoserine modification. An N6-succinyllysine mark is found at K8 and K12. Position 17 is an N6-acetyllysine; alternate (K17). Position 17 is an N6-succinyllysine; alternate (K17). A Phosphotyrosine modification is found at Y25. S36 bears the Phosphoserine mark. K41 carries the post-translational modification N6-succinyllysine. Residue S50 is modified to Phosphoserine. Residue H59 participates in O2 binding. Position 88 (H88) interacts with heme b. Phosphoserine is present on S103. Phosphothreonine is present on T109. Residue S125 is modified to Phosphoserine. Phosphothreonine is present on residues T135 and T138. S139 carries the phosphoserine modification.

It belongs to the globin family. Heterotetramer of two alpha chains and two beta chains. In terms of tissue distribution, red blood cells.

In terms of biological role, involved in oxygen transport from the lung to the various peripheral tissues. Hemopressin acts as an antagonist peptide of the cannabinoid receptor CNR1. Hemopressin-binding efficiently blocks cannabinoid receptor CNR1 and subsequent signaling. The protein is Hemoglobin subunit alpha (HBA) of Notamacropus eugenii (Tammar wallaby).